The chain runs to 455 residues: 1-deoxy-D-xylulose 5-phosphate reductoisomerase (455 aa).

Positions 30, 31, 32, 33, 63, and 159 each coordinate NADPH. Lys160 lines the 1-deoxy-D-xylulose 5-phosphate pocket. Glu161 contacts NADPH. Mn(2+) is bound at residue Asp185. Residues Ser186 and Glu187 each coordinate 1-deoxy-D-xylulose 5-phosphate. Residue Glu187 coordinates Mn(2+). Residues 205-214 are compositionally biased toward polar residues; the sequence is YATAKQSIQP. The interval 205–233 is disordered; that stretch reads YATAKQSIQPESVRATDPPSSTTDSPAKT. 1-deoxy-D-xylulose 5-phosphate is bound by residues Ser246 and His269. Gly275 lines the NADPH pocket. Positions 282, 287, 288, and 291 each coordinate 1-deoxy-D-xylulose 5-phosphate. Position 291 (Glu291) interacts with Mn(2+).

It belongs to the DXR family. Mg(2+) serves as cofactor. It depends on Mn(2+) as a cofactor.

The catalysed reaction is 2-C-methyl-D-erythritol 4-phosphate + NADP(+) = 1-deoxy-D-xylulose 5-phosphate + NADPH + H(+). It functions in the pathway isoprenoid biosynthesis; isopentenyl diphosphate biosynthesis via DXP pathway; isopentenyl diphosphate from 1-deoxy-D-xylulose 5-phosphate: step 1/6. Its function is as follows. Catalyzes the NADPH-dependent rearrangement and reduction of 1-deoxy-D-xylulose-5-phosphate (DXP) to 2-C-methyl-D-erythritol 4-phosphate (MEP). The sequence is that of 1-deoxy-D-xylulose 5-phosphate reductoisomerase from Rhodopirellula baltica (strain DSM 10527 / NCIMB 13988 / SH1).